Reading from the N-terminus, the 128-residue chain is MSEGGGRVSRIFAAPTRLCRWPALIECGVNLTQPLCEWMIQVARDRTLSLAWEVASLLTLSSSEVGLEGVGTIWPSSYSSEESSRNGAEQGRQLSIEGPFQGQNCPSHPAAALPLPMRGESQATSCQV.

The tract at residues 77–128 is disordered; the sequence is SYSSEESSRNGAEQGRQLSIEGPFQGQNCPSHPAAALPLPMRGESQATSCQV.

As to quaternary structure, interacts with PRDX6.

It localises to the cytoplasm. It is found in the nucleus. The sequence is that of Saitohin (STH) from Gorilla gorilla gorilla (Western lowland gorilla).